Consider the following 38-residue polypeptide: Cytochrome b6-f complex subunit 5 (38 aa).

A helical membrane pass occupies residues 5 to 25; that stretch reads LVLGLVMGLVPITLAGLFVAA.

Belongs to the PetG family. As to quaternary structure, the 4 large subunits of the cytochrome b6-f complex are cytochrome b6, subunit IV (17 kDa polypeptide, PetD), cytochrome f and the Rieske protein, while the 4 small subunits are PetG, PetL, PetM and PetN. The complex functions as a dimer.

The protein localises to the cellular thylakoid membrane. In terms of biological role, component of the cytochrome b6-f complex, which mediates electron transfer between photosystem II (PSII) and photosystem I (PSI), cyclic electron flow around PSI, and state transitions. PetG is required for either the stability or assembly of the cytochrome b6-f complex. This is Cytochrome b6-f complex subunit 5 from Gloeothece citriformis (strain PCC 7424) (Cyanothece sp. (strain PCC 7424)).